Reading from the N-terminus, the 671-residue chain is UvrABC system protein B (671 aa).

In terms of domain architecture, Helicase ATP-binding spans 31–414 (DGFEQGEKAQ…ELNQTDHKVE (384 aa)). 44-51 (GATGTGKT) contacts ATP. Positions 97–120 (YYDYYQPEAYVPQSDTYIEKDSSI) match the Beta-hairpin motif. Residues 435–601 (QIDDLVGEVN…TIVKPIRDVI (167 aa)) form the Helicase C-terminal domain. In terms of domain architecture, UVR spans 630–665 (QNMIKTLTAQMQEAAKKLDFEEAANLRDAIMDLKKQ).

This sequence belongs to the UvrB family. Forms a heterotetramer with UvrA during the search for lesions. Interacts with UvrC in an incision complex.

The protein resides in the cytoplasm. The UvrABC repair system catalyzes the recognition and processing of DNA lesions. A damage recognition complex composed of 2 UvrA and 2 UvrB subunits scans DNA for abnormalities. Upon binding of the UvrA(2)B(2) complex to a putative damaged site, the DNA wraps around one UvrB monomer. DNA wrap is dependent on ATP binding by UvrB and probably causes local melting of the DNA helix, facilitating insertion of UvrB beta-hairpin between the DNA strands. Then UvrB probes one DNA strand for the presence of a lesion. If a lesion is found the UvrA subunits dissociate and the UvrB-DNA preincision complex is formed. This complex is subsequently bound by UvrC and the second UvrB is released. If no lesion is found, the DNA wraps around the other UvrB subunit that will check the other stand for damage. In Lactobacillus johnsonii (strain CNCM I-12250 / La1 / NCC 533), this protein is UvrABC system protein B.